The chain runs to 371 residues: Aspartate-semialdehyde dehydrogenase (371 aa).

NADP(+) is bound by residues 11 to 14 (RGMV), 38 to 39 (TS), and glutamine 75. Arginine 104 is a phosphate binding site. Cysteine 137 acts as the Acyl-thioester intermediate in catalysis. Substrate is bound at residue glutamine 164. 167-168 (SG) provides a ligand contact to NADP(+). Glutamate 243 contributes to the substrate binding site. Lysine 246 lines the phosphate pocket. Residue arginine 269 participates in substrate binding. The active-site Proton acceptor is histidine 276. An NADP(+)-binding site is contributed by glutamine 352.

The protein belongs to the aspartate-semialdehyde dehydrogenase family. Homodimer.

It catalyses the reaction L-aspartate 4-semialdehyde + phosphate + NADP(+) = 4-phospho-L-aspartate + NADPH + H(+). Its pathway is amino-acid biosynthesis; L-lysine biosynthesis via DAP pathway; (S)-tetrahydrodipicolinate from L-aspartate: step 2/4. It participates in amino-acid biosynthesis; L-methionine biosynthesis via de novo pathway; L-homoserine from L-aspartate: step 2/3. It functions in the pathway amino-acid biosynthesis; L-threonine biosynthesis; L-threonine from L-aspartate: step 2/5. Functionally, catalyzes the NADPH-dependent formation of L-aspartate-semialdehyde (L-ASA) by the reductive dephosphorylation of L-aspartyl-4-phosphate. The chain is Aspartate-semialdehyde dehydrogenase from Buchnera aphidicola subsp. Schizaphis graminum (strain Sg).